The following is a 311-amino-acid chain: Formimidoylglutamase (311 aa).

The Mn(2+) site is built by histidine 122, aspartate 151, histidine 153, aspartate 155, cysteine 242, and aspartate 244.

It belongs to the arginase family. Mn(2+) is required as a cofactor.

The enzyme catalyses N-formimidoyl-L-glutamate + H2O = formamide + L-glutamate. The protein operates within amino-acid degradation; L-histidine degradation into L-glutamate; L-glutamate from N-formimidoyl-L-glutamate (hydrolase route): step 1/1. In terms of biological role, catalyzes the conversion of N-formimidoyl-L-glutamate to L-glutamate and formamide. This chain is Formimidoylglutamase, found in Pseudomonas paraeruginosa (strain DSM 24068 / PA7) (Pseudomonas aeruginosa (strain PA7)).